A 392-amino-acid chain; its full sequence is Chorismate synthase (392 aa).

Arg-40 and Arg-46 together coordinate NADP(+). FMN is bound by residues 135–137 (RAS), 256–257 (QA), Gly-300, 315–319 (KPIST), and Arg-341.

It belongs to the chorismate synthase family. In terms of assembly, homotetramer. Requires FMNH2 as cofactor.

The catalysed reaction is 5-O-(1-carboxyvinyl)-3-phosphoshikimate = chorismate + phosphate. It participates in metabolic intermediate biosynthesis; chorismate biosynthesis; chorismate from D-erythrose 4-phosphate and phosphoenolpyruvate: step 7/7. Functionally, catalyzes the anti-1,4-elimination of the C-3 phosphate and the C-6 proR hydrogen from 5-enolpyruvylshikimate-3-phosphate (EPSP) to yield chorismate, which is the branch point compound that serves as the starting substrate for the three terminal pathways of aromatic amino acid biosynthesis. This reaction introduces a second double bond into the aromatic ring system. The sequence is that of Chorismate synthase from Acidothermus cellulolyticus (strain ATCC 43068 / DSM 8971 / 11B).